Consider the following 128-residue polypeptide: Aspartate 1-decarboxylase (128 aa).

The active-site Schiff-base intermediate with substrate; via pyruvic acid is the Ser-25. Ser-25 carries the post-translational modification Pyruvic acid (Ser). Thr-57 contacts substrate. Residue Tyr-58 is the Proton donor of the active site. 73 to 75 (GSA) is a binding site for substrate.

This sequence belongs to the PanD family. In terms of assembly, heterooctamer of four alpha and four beta subunits. The cofactor is pyruvate. Is synthesized initially as an inactive proenzyme, which is activated by self-cleavage at a specific serine bond to produce a beta-subunit with a hydroxyl group at its C-terminus and an alpha-subunit with a pyruvoyl group at its N-terminus.

Its subcellular location is the cytoplasm. It carries out the reaction L-aspartate + H(+) = beta-alanine + CO2. It participates in cofactor biosynthesis; (R)-pantothenate biosynthesis; beta-alanine from L-aspartate: step 1/1. In terms of biological role, catalyzes the pyruvoyl-dependent decarboxylation of aspartate to produce beta-alanine. This Burkholderia thailandensis (strain ATCC 700388 / DSM 13276 / CCUG 48851 / CIP 106301 / E264) protein is Aspartate 1-decarboxylase.